The chain runs to 158 residues: MNKKKDDCGGLSLPSDSVFCSLHANDSIWQHDKKVLRGGKASRDGLEAERIAAQALEADGWQILGRRLRTSAGEIDILAEMDGLLAIVEVKYRPTLSEAAHALGPRQRKRLIAAASYVLAQHPEYGTEGVRFDVIVVDMAGQVRRITDAFRLDEEGWP.

Belongs to the UPF0102 family.

This chain is UPF0102 protein GbCGDNIH1_0975, found in Granulibacter bethesdensis (strain ATCC BAA-1260 / CGDNIH1).